The following is a 1102-amino-acid chain: MELENYKQPVVLREDNCRRRRRMKPRSAAASLSSMELIPIEFVLPTSQRKCKSPETALLHVAGHGNVEQMKAQVWLRALETSVAADFYHRLGPHHFLLLYQKKGQWYEIYDKYQVVQTLDCLRYWKATHRSPGQIHLVQRHPPSEESQAFQRQLTALIGYDVTDVSNVHDDELEFTRRGLVTPRMAEVASRDPKLYAMHPWVTSKPLPEYLWKKIANNCIFIVIHRSTTSQTIKVSPDDTPGAILQSFFTKMAKKKSLMDIPESQSEQDFVLRVCGRDEYLVGETPIKNFQWVRHCLKNGEEIHVVLDTPPDPALDEVRKEEWPLVDDCTGVTGYHEQLTIHGKDHESVFTVSLWDCDRKFRVKIRGIDIPVLPRNTDLTVFVEANIQHGQQVLCQRRTSPKPFTEEVLWNVWLEFSIKIKDLPKGALLNLQIYCGKAPALSSKASAESPSSESKGKVQLLYYVNLLLIDHRFLLRRGEYVLHMWQISGKGEDQGSFNADKLTSATNPDKENSMSISILLDNYCHPIALPKHQPTPDPEGDRVRAEMPNQLRKQLEAIIATDPLNPLTAEDKELLWHFRYESLKHPKAYPKLFSSVKWGQQEIVAKTYQLLARREVWDQSALDVGLTMQLLDCNFSDENVRAIAVQKLESLEDDDVLHYLLQLVQAVKFEPYHDSALARFLLKRGLRNKRIGHFLFWFLRSEIAQSRHYQQRFAVILEAYLRGCGTAMLHDFTQQVQVIEMLQKVTLDIKSLSAEKYDVSSQVISQLKQKLENLQNSQLPESFRVPYDPGLKAGALAIEKCKVMASKKKPLWLEFKCADPTALSNETIGIIFKHGDDLRQDMLILQILRIMESIWETESLDLCLLPYGCISTGDKIGMIEIVKDATTIAKIQQSTVGNTGAFKDEVLNHWLKEKSPTEEKFQAAVERFVYSCAGYCVATFVLGIGDRHNDNIMITETGNLFHIDFGHILGNYKSFLGINKERVPFVLTPDFLFVMGTSGKKTSPHFQKFQDICVKAYLALRHHTNLLIILFSMMLMTGMPQLTSKEDIEYIRDALTVGKNEEDAKKYFLDQIEVCRDKGWTVQFNWFLHLVLGIKQGEKHSA.

Positions 34–141 constitute a PI3K-ABD domain; that stretch reads SMELIPIEFV…PGQIHLVQRH (108 aa). Positions 217 to 309 constitute a PI3K-RBD domain; the sequence is NNCIFIVIHR…GEEIHVVLDT (93 aa). Positions 357–521 constitute a C2 PI3K-type domain; it reads CDRKFRVKIR…NSMSISILLD (165 aa). The PIK helical domain maps to 541–723; the sequence is DRVRAEMPNQ…AVILEAYLRG (183 aa). Residues 797 to 1080 form the PI3K/PI4K catalytic domain; that stretch reads AIEKCKVMAS…QIEVCRDKGW (284 aa). A G-loop region spans residues 803–809; sequence VMASKKK. Residues 829 to 838 and 864 to 872 contribute to the ATP site; these read GIIFKHGDDL and LLPYGCIST. The tract at residues 943–951 is catalytic loop; that stretch reads GIGDRHNDN. 961–969 is a binding site for ATP; sequence FHIDFGHIL. Residues 962 to 988 form an activation loop region; sequence HIDFGHILGNYKSFLGINKERVPFVLT. The residue at position 1024 (threonine 1024) is a Phosphothreonine; by PKA. Serine 1101 bears the Phosphoserine; by autocatalysis mark.

It belongs to the PI3/PI4-kinase family. In terms of assembly, heterodimer of a catalytic subunit PIK3CG and a PIK3R5 or PIK3R6 regulatory subunit. Interacts with GRK2 through the PIK helical domain. Interaction with GRK2 is required for targeting to agonist-occupied receptor. Interacts with PDE3B; regulates PDE3B activity and thereby cAMP levels in cells. Interacts with TPM2. Interacts with EPHA8; regulates integrin-mediated cell adhesion to substrate. Interacts with HRAS; the interaction is required for membrane recruitment and beta-gamma G protein dimer-dependent activation of the PI3K gamma complex PIK3CG:PIK3R6. Autophosphorylation at Ser-1101 has no effect on the phosphatidylinositol-4,5-bisphosphate 3-kinase activity. Pancreas, skeletal muscle, liver and heart.

It is found in the cytoplasm. Its subcellular location is the cell membrane. The catalysed reaction is a 1,2-diacyl-sn-glycero-3-phospho-(1D-myo-inositol) + ATP = a 1,2-diacyl-sn-glycero-3-phospho-(1D-myo-inositol-3-phosphate) + ADP + H(+). It carries out the reaction a 1,2-diacyl-sn-glycero-3-phospho-(1D-myo-inositol-4,5-bisphosphate) + ATP = a 1,2-diacyl-sn-glycero-3-phospho-(1D-myo-inositol-3,4,5-trisphosphate) + ADP + H(+). The enzyme catalyses a 1,2-diacyl-sn-glycero-3-phospho-(1D-myo-inositol 4-phosphate) + ATP = a 1,2-diacyl-sn-glycero-3-phospho-(1D-myo-inositol-3,4-bisphosphate) + ADP + H(+). It catalyses the reaction L-seryl-[protein] + ATP = O-phospho-L-seryl-[protein] + ADP + H(+). It functions in the pathway phospholipid metabolism; phosphatidylinositol phosphate biosynthesis. Activated by both the alpha and the beta-gamma G proteins following stimulation of G protein-coupled receptors (GPCRs). Activation by GPCRs is assisted by the regulatory subunits (PIK3R5 or PIK3R6) leading to the translocation from the cytosol to the plasma membrane and to kinase activation. Inhibited by AS-604850 and AS-605240. Functionally, phosphoinositide-3-kinase (PI3K) that phosphorylates PtdIns(4,5)P2 (Phosphatidylinositol 4,5-bisphosphate) to generate phosphatidylinositol 3,4,5-trisphosphate (PIP3). PIP3 plays a key role by recruiting PH domain-containing proteins to the membrane, including AKT1 and PDPK1, activating signaling cascades involved in cell growth, survival, proliferation, motility and morphology. Links G-protein coupled receptor activation to PIP3 production. Involved in immune, inflammatory and allergic responses. Modulates leukocyte chemotaxis to inflammatory sites and in response to chemoattractant agents. May control leukocyte polarization and migration by regulating the spatial accumulation of PIP3 and by regulating the organization of F-actin formation and integrin-based adhesion at the leading edge. Controls motility of dendritic cells. Together with PIK3CD is involved in natural killer (NK) cell development and migration towards the sites of inflammation. Participates in T-lymphocyte migration. Regulates T-lymphocyte proliferation, activation, and cytokine production. Together with PIK3CD participates in T-lymphocyte development. Required for B-lymphocyte development and signaling. Together with PIK3CD participates in neutrophil respiratory burst. Together with PIK3CD is involved in neutrophil chemotaxis and extravasation. Together with PIK3CB promotes platelet aggregation and thrombosis. Regulates alpha-IIb/beta-3 integrins (ITGA2B/ ITGB3) adhesive function in platelets downstream of P2Y12 through a lipid kinase activity-independent mechanism. May have also a lipid kinase activity-dependent function in platelet aggregation. Involved in endothelial progenitor cell migration. Negative regulator of cardiac contractility. Modulates cardiac contractility by anchoring protein kinase A (PKA) and PDE3B activation, reducing cAMP levels. Regulates cardiac contractility also by promoting beta-adrenergic receptor internalization by binding to GRK2 and by non-muscle tropomyosin phosphorylation. Also has serine/threonine protein kinase activity: both lipid and protein kinase activities are required for beta-adrenergic receptor endocytosis. May also have a scaffolding role in modulating cardiac contractility. Contributes to cardiac hypertrophy under pathological stress. Through simultaneous binding of PDE3B to RAPGEF3 and PIK3R6 is assembled in a signaling complex in which the PI3K gamma complex is activated by RAPGEF3 and which is involved in angiogenesis. In neutrophils, participates in a phospholipase C-activating N-formyl peptide-activated GPCR (G protein-coupled receptor) signaling pathway downstream of RASGRP4-mediated Ras-activation, to promote neutrophil functional responses. The polypeptide is Phosphatidylinositol 4,5-bisphosphate 3-kinase catalytic subunit gamma isoform (PIK3CG) (Homo sapiens (Human)).